A 193-amino-acid chain; its full sequence is Molybdopterin synthase catalytic subunit (193 aa).

Residues 118–119 (HR), K134, and 141–143 (KKE) contribute to the substrate site. The disordered stretch occupies residues 159 to 193 (DRTTTDGTTASSPAPATRPAKGGGCCGRKVRVNES). Residues 163-178 (TDGTTASSPAPATRPA) are compositionally biased toward low complexity.

Belongs to the MoaE family. MOCS2B subfamily. As to quaternary structure, heterotetramer; composed of 2 small (MOCS2A) and 2 large (MOCS2B) subunits.

The protein resides in the cytoplasm. The enzyme catalyses 2 [molybdopterin-synthase sulfur-carrier protein]-C-terminal-Gly-aminoethanethioate + cyclic pyranopterin phosphate + H2O = molybdopterin + 2 [molybdopterin-synthase sulfur-carrier protein]-C-terminal Gly-Gly + 2 H(+). It participates in cofactor biosynthesis; molybdopterin biosynthesis. Functionally, catalytic subunit of the molybdopterin synthase complex, a complex that catalyzes the conversion of precursor Z into molybdopterin. Acts by mediating the incorporation of 2 sulfur atoms from thiocarboxylated MOCS2A into precursor Z to generate a dithiolene group. This is Molybdopterin synthase catalytic subunit from Oryza sativa subsp. japonica (Rice).